The chain runs to 673 residues: RAS guanyl-releasing protein 4 (673 aa).

2 stretches are compositionally biased toward basic residues: residues 1–10 (MNRKDSKRKS) and 20–32 (GRGRPRQARRHKT). 2 disordered regions span residues 1–34 (MNRKDSKRKSHQECPVKTGGRGRPRQARRHKTCP) and 162–188 (QSLGDFSSRLSPGGPGPPHPMSSPGLG). An N-terminal Ras-GEF domain is found at 49 to 172 (GMLNEGGCSE…SLGDFSSRLS (124 aa)). The Ras-GEF domain occupies 201 to 432 (ETGELAEHLT…YELSYAREPR (232 aa)). One can recognise an EF-hand domain in the interval 466–501 (HVEQLVESVFKNYDPDGRGTISQEDFERLSGNFPFA). Residues 540-590 (LHTFQEVTFRKPTFCNSCSGFLWGVTKQGYRCRDCGLCCHRHCRDQVKVEC) form a Phorbol-ester/DAG-type zinc finger. 2 disordered regions span residues 593-618 (RPGAKGDASPPEAPVPPTPVPQASCG) and 638-673 (RHAWTQTESPHPSWEPETVPLPAKASPPTESSKLNS). A compositionally biased stretch (pro residues) spans 603–612 (PEAPVPPTPV).

This sequence belongs to the RASGRP family.

The protein resides in the cytoplasm. It is found in the cell membrane. Functionally, functions as a cation- and diacylglycerol (DAG)-regulated nucleotide exchange factor activating Ras through the exchange of bound GDP for GTP. In neutrophils, participates in a phospholipase C-activating N-formyl peptide-activated GPCR (G protein-coupled receptor) signaling pathway by promoting Ras-mediated activation of PIK3CG/PI3Kgamma to promote neutrophil functional responses. In CD117(+) dendritic cells and mast cells, participates in an lipopolysaccharide (LPS)-activated signaling pathway that stimulates the production of interferon-gamma and other pro-inflammatory cytokines by natural killer (NK) cells. May function in mast cell differentiation. Does not appear to be required for the development of B-cells, DC-cells, T-cells, or NK-cells. This is RAS guanyl-releasing protein 4 (RASGRP4) from Bos taurus (Bovine).